The following is a 180-amino-acid chain: NADH-quinone oxidoreductase subunit I (180 aa).

4Fe-4S ferredoxin-type domains follow at residues 48–80 (IVLT…LQKA) and 90–119 (EFFR…LTPD). Residues Cys-60, Cys-63, Cys-66, Cys-70, Cys-99, Cys-102, Cys-105, and Cys-109 each coordinate [4Fe-4S] cluster. A compositionally biased stretch (basic and acidic residues) spans 161–174 (KPKGDAEHEAKPID). The disordered stretch occupies residues 161–180 (KPKGDAEHEAKPIDVKSLLP).

The protein belongs to the complex I 23 kDa subunit family. In terms of assembly, NDH-1 is composed of 14 different subunits. Subunits NuoA, H, J, K, L, M, N constitute the membrane sector of the complex. [4Fe-4S] cluster serves as cofactor.

It is found in the cell inner membrane. The catalysed reaction is a quinone + NADH + 5 H(+)(in) = a quinol + NAD(+) + 4 H(+)(out). NDH-1 shuttles electrons from NADH, via FMN and iron-sulfur (Fe-S) centers, to quinones in the respiratory chain. The immediate electron acceptor for the enzyme in this species is believed to be ubiquinone. Couples the redox reaction to proton translocation (for every two electrons transferred, four hydrogen ions are translocated across the cytoplasmic membrane), and thus conserves the redox energy in a proton gradient. In Aeromonas salmonicida (strain A449), this protein is NADH-quinone oxidoreductase subunit I.